Consider the following 115-residue polypeptide: MWDPLLNEFPETVHGFRCMLAIKYLQLVENTYSPDTLGYDLIRDLISVIRARDYGETSRRYCHFHSRLEGASPAELRQPLYGSCCCPHCPRHQKTNVVKQAHVPEAHDVPDVQKP.

It belongs to the geminiviridae protein AV2/V2 family. Interacts with host SGS3.

It is found in the host cytoplasm. It localises to the host perinuclear region. Functionally, through its interaction with host SGS3, acts as a suppressor of RNA-mediated gene silencing, also known as post-transcriptional gene silencing (PTGS), a mechanism of plant viral defense that limits the accumulation of viral RNAs. This is Protein V2 from Tomato yellow leaf curl China virus (TYLCCNV).